The chain runs to 442 residues: Protein trichome birefringence-like 26 (442 aa).

Residues 51 to 71 traverse the membrane as a helical; Signal-anchor for type II membrane protein segment; it reads FFLYFSLVALAYYFIISSLAV. The GDS motif motif lies at 164–166; sequence GDS. A DCXHWCLPGXXDXWN motif motif is present at residues 409–423; the sequence is DCLHWCLPGPIDSWN.

Belongs to the PC-esterase family. TBL subfamily.

Its subcellular location is the membrane. Functionally, may be involved in the O-acetylation of mannan. May act as a bridging protein that binds pectin and other cell wall polysaccharides. Probably involved in maintaining esterification of pectins. This chain is Protein trichome birefringence-like 26 (TBL26), found in Arabidopsis thaliana (Mouse-ear cress).